A 704-amino-acid polypeptide reads, in one-letter code: Probable serine/threonine-protein kinase WNK1 (704 aa).

Residues 27–284 (GRYNDVLGKG…ARELLKDPFL (258 aa)) enclose the Protein kinase domain. ATP is bound by residues 107 to 110 (TEMF) and Lys-157. Asp-174 (proton acceptor) is an active-site residue. Residues 499-521 (QTDLQDSGGSSDDGGGQTQHVKD) form a disordered region.

It belongs to the protein kinase superfamily. Ser/Thr protein kinase family. WNK subfamily.

It carries out the reaction L-seryl-[protein] + ATP = O-phospho-L-seryl-[protein] + ADP + H(+). The enzyme catalyses L-threonyl-[protein] + ATP = O-phospho-L-threonyl-[protein] + ADP + H(+). The sequence is that of Probable serine/threonine-protein kinase WNK1 (WNK1) from Oryza sativa subsp. japonica (Rice).